The following is a 192-amino-acid chain: Dynein axonemal light chain 1 (192 aa).

LRR repeat units follow at residues 49–70, 71–92, 94–115, and 116–137; these read NCER…NGLK, NLKI…EAVG, TLEE…HVMK, and KLKV…LKLA. In terms of domain architecture, LRRCT spans 150–192; that stretch reads NPLEEKYSADGNWIEEATKRLPKLKKLDGNPVIKQEEETEGES.

This sequence belongs to the dynein light chain LC1-type family. Interacts with DNAH5, a outer arm dynein heavy chain. Interacts with tubulin located within the A-tubule of the outer doublets in a ATP-independent manner.

The protein resides in the cytoplasm. It is found in the cytoskeleton. Its subcellular location is the cilium axoneme. Its function is as follows. Part of the multisubunit axonemal ATPase complexes that generate the force for cilia motility and govern beat frequency. Component of the outer arm dynein (ODA). May be involved in a mechanosensory feedback mechanism controlling ODA activity based on external conformational cues by tethering the outer arm dynein heavy chain (DNAH5) to the microtubule within the axoneme. This Danio rerio (Zebrafish) protein is Dynein axonemal light chain 1 (dnal1).